Reading from the N-terminus, the 239-residue chain is Probable phosphatase Csac_1188 (239 aa).

The Zn(2+) site is built by His-8, His-10, His-16, His-41, Glu-74, His-102, His-132, Asp-192, and His-194.

Belongs to the PHP family. Zn(2+) is required as a cofactor.

The chain is Probable phosphatase Csac_1188 from Caldicellulosiruptor saccharolyticus (strain ATCC 43494 / DSM 8903 / Tp8T 6331).